The following is a 255-amino-acid chain: Phosphate import ATP-binding protein PstB (255 aa).

In terms of domain architecture, ABC transporter spans 9 to 250; sequence IAVQNLNFYY…PKIQRTEDYI (242 aa). 41–48 is an ATP binding site; sequence GPSGCGKS.

It belongs to the ABC transporter superfamily. Phosphate importer (TC 3.A.1.7) family. As to quaternary structure, the complex is composed of two ATP-binding proteins (PstB), two transmembrane proteins (PstC and PstA) and a solute-binding protein (PstS).

It is found in the cell inner membrane. The enzyme catalyses phosphate(out) + ATP + H2O = ADP + 2 phosphate(in) + H(+). Its function is as follows. Part of the ABC transporter complex PstSACB involved in phosphate import. Responsible for energy coupling to the transport system. This chain is Phosphate import ATP-binding protein PstB, found in Haemophilus influenzae (strain 86-028NP).